Consider the following 411-residue polypeptide: MSGFVAGEEAVKSALSAATWIGAASPKYSHLVLSRVFNIYSEYIYANGFKLTRENLIEDFGTRPEDVDPFMKIFGGPNGIATYLTALPGLLPILPHPRNIPIIVPLFCVFTVMTSLAVGLRLWSRQKVAGGIRSFDWLALAGFGLTIIYGAVSVYHSKVSGPYQAFYDRTWDQMKENYKVYLVLTIMYPFIMGLIKISLLLFYYRVATLNYVQWAVYATGSLTIANSIAAIITHCLAFMPIDFWNHFLQSPFKFNSRTPMLVFGAVYILTDVAILIIPMPMVFQLKLYPREKVIAVIAFSLGGVACVASGFRIWAIDEFQNYSGKNSSGLMIDAWTMIELNLTLICASAPAIRALAIHYAPKILSTLPSAFSSSGATRGSKSAGSSGKSKTPESEKSMQVSQSPVIPKEVV.

Residues Met1–Asn99 lie on the Extracellular side of the membrane. The helical transmembrane segment at Ile100–Leu120 threads the bilayer. At Arg121 to Ser134 the chain is on the cytoplasmic side. The helical transmembrane segment at Phe135–Tyr155 threads the bilayer. Topologically, residues His156 to Tyr181 are extracellular. Residues Leu182–Phe202 traverse the membrane as a helical segment. Topologically, residues Tyr203 to Ser227 are cytoplasmic. Residues Ile228–Leu248 traverse the membrane as a helical segment. Residues Gln249–Val262 are Extracellular-facing. Residues Phe263 to Phe283 traverse the membrane as a helical segment. The Cytoplasmic portion of the chain corresponds to Gln284 to Lys292. Residues Val293 to Ile313 traverse the membrane as a helical segment. The Extracellular segment spans residues Trp314–Ser328. N-linked (GlcNAc...) asparagine glycans are attached at residues Asn321 and Asn326. The helical transmembrane segment at Gly329 to Ala349 threads the bilayer. The Cytoplasmic segment spans residues Pro350–Val411. Residues Phe371 to Val411 form a disordered region. Positions Ser372–Ser389 are enriched in low complexity.

It belongs to the SAT4 family. In terms of assembly, interacts with guanine nucleotide-binding protein alpha GPA2; to activate adenylate cyclase and positively regulate nematode trap formation.

Its subcellular location is the cell membrane. In terms of biological role, receptor that senses nematode-derived signals at the cell surface and signals via adenylate cyclase to positively regulate trap formation for nematode capture. In Arthrobotrys oligospora (strain ATCC 24927 / CBS 115.81 / DSM 1491) (Nematode-trapping fungus), this protein is Receptor GIN3.